The primary structure comprises 178 residues: ATP synthase subunit delta (178 aa).

Belongs to the ATPase delta chain family. In terms of assembly, F-type ATPases have 2 components, F(1) - the catalytic core - and F(0) - the membrane proton channel. F(1) has five subunits: alpha(3), beta(3), gamma(1), delta(1), epsilon(1). F(0) has three main subunits: a(1), b(2) and c(10-14). The alpha and beta chains form an alternating ring which encloses part of the gamma chain. F(1) is attached to F(0) by a central stalk formed by the gamma and epsilon chains, while a peripheral stalk is formed by the delta and b chains.

It localises to the cell inner membrane. In terms of biological role, f(1)F(0) ATP synthase produces ATP from ADP in the presence of a proton or sodium gradient. F-type ATPases consist of two structural domains, F(1) containing the extramembraneous catalytic core and F(0) containing the membrane proton channel, linked together by a central stalk and a peripheral stalk. During catalysis, ATP synthesis in the catalytic domain of F(1) is coupled via a rotary mechanism of the central stalk subunits to proton translocation. This protein is part of the stalk that links CF(0) to CF(1). It either transmits conformational changes from CF(0) to CF(1) or is implicated in proton conduction. The polypeptide is ATP synthase subunit delta (Dechloromonas aromatica (strain RCB)).